Reading from the N-terminus, the 78-residue chain is Pigment-dispersing hormone 2 peptides (78 aa).

The first 21 residues, Met-1–Gly-21, serve as a signal peptide directing secretion. Ala-75 is subject to Alanine amide.

The protein belongs to the arthropod PDH family. Eyestalk sinus gland.

It is found in the secreted. Functionally, the pigment-dispersing hormone causes the migration of the distal retinal pigment into the proximal end of the pigment chromatophore cells and thus decreases the amount of light entering the retinulas. May also function as a neurotransmitter and/or neuromodulator. In Callinectes sapidus (Blue crab), this protein is Pigment-dispersing hormone 2 peptides (PDH2).